Reading from the N-terminus, the 102-residue chain is NADH-quinone oxidoreductase subunit K (102 aa).

3 consecutive transmembrane segments (helical) span residues 6 to 26, 31 to 51, and 62 to 82; these read ATHFLLLSAALFIIGMVGVLT, LVIFMCIELMLNAVNVSLIGF, and VFALFVIAIAAAEAVVGLGIV.

Belongs to the complex I subunit 4L family. As to quaternary structure, NDH-1 is composed of 14 different subunits. Subunits NuoA, H, J, K, L, M, N constitute the membrane sector of the complex.

Its subcellular location is the cell membrane. It catalyses the reaction a quinone + NADH + 5 H(+)(in) = a quinol + NAD(+) + 4 H(+)(out). Functionally, NDH-1 shuttles electrons from NADH, via FMN and iron-sulfur (Fe-S) centers, to quinones in the respiratory chain. The immediate electron acceptor for the enzyme in this species is believed to be ubiquinone. Couples the redox reaction to proton translocation (for every two electrons transferred, four hydrogen ions are translocated across the cytoplasmic membrane), and thus conserves the redox energy in a proton gradient. This Thermomicrobium roseum (strain ATCC 27502 / DSM 5159 / P-2) protein is NADH-quinone oxidoreductase subunit K.